Reading from the N-terminus, the 808-residue chain is Protein NLP5 (808 aa).

Positions 56–68 (PTQDTSNSLSQMY) are enriched in polar residues. A disordered region spans residues 56-83 (PTQDTSNSLSQMYGQDCPERSSLEDQNQ). An RWP-RK domain is found at 536 to 617 (NRVTEKKRTK…IDSVEGVSGH (82 aa)). The tract at residues 660–680 (SPGSSCSHSSSCSSETQVIKE) is disordered. The span at 663–673 (SSCSHSSSCSS) shows a compositional bias: low complexity. Positions 710–793 (FLRVKVSYEE…QTIKLLLQLS (84 aa)) constitute a PB1 domain.

Its subcellular location is the nucleus. Functionally, probable transcription factor. The chain is Protein NLP5 (NLP5) from Arabidopsis thaliana (Mouse-ear cress).